Here is a 561-residue protein sequence, read N- to C-terminus: Delta(24)-sterol reductase (561 aa).

Over 1-25 (MSDLQTPLVRPKRKKTWVDYFVKFR) the chain is Lumenal. Serine 2 is modified (phosphoserine). Residues 26-46 (WIIVIFIVLPFSATFYFLIYL) traverse the membrane as a helical; Signal-anchor segment. Over 47–561 (GDMWSESKSF…HLETAYAEAD (515 aa)) the chain is Cytoplasmic. One can recognise an FAD-binding PCMH-type domain in the interval 49 to 232 (MWSESKSFEK…VAAEIRLIKV (184 aa)). Positions 518–539 (CRKKYRAIGTFMSVYYKSKKGR) are interaction with calmodulin.

Belongs to the DIMINUTO family. In terms of assembly, interacts with calmodulin.

The protein localises to the microsome membrane. It carries out the reaction lathosterol + NADP(+) = 5alpha-cholesta-7,24-dien-3beta-ol + NADPH + H(+). Functionally, plays a critical role in the general process of plant cell elongation. Involved in the synthesis of campesterol, an early precursor of brassinolide. Required for the conversion of 24-methylenecholesterol to campesterol and for the conversion of isofucosterol to sitosterol. Necessary for both the isomerization and reduction of 24-methylenecholesterol. Regulates indirectly phytochrome-mediated light responses through the modulation of brassinosteroid biosynthesis. The protein is Delta(24)-sterol reductase (DIM) of Arabidopsis thaliana (Mouse-ear cress).